The sequence spans 147 residues: uncharacterized protein (147 aa).

This sequence to B.subtilis XkdM.

This is an uncharacterized protein from Bacillus subtilis (strain 168).